We begin with the raw amino-acid sequence, 573 residues long: Solute carrier family 41 member 2 (573 aa).

Topologically, residues 1 to 162 (MTHSKGRPVT…KESSGVMALQ (162 aa)) are extracellular. Phosphoserine occurs at positions 137 and 138. A helical membrane pass occupies residues 163–183 (ILVPFLLAGFGTVSAGMVLDI). The Cytoplasmic portion of the chain corresponds to 184–195 (VQHWEVFKNVTE). Residues 196-216 (VFILVPALLGLKGNLEMTLAS) form a helical membrane-spanning segment. Residues 217–245 (RLSTAVNVGKMDSPIEKWNLIIGNLALKQ) lie on the Extracellular side of the membrane. A helical transmembrane segment spans residues 246–266 (VQATVVGFLAAVAAIILGWIP). Topologically, residues 267–282 (EGKYYLSHSILLCSSS) are cytoplasmic. Residues 283–303 (VATAFIASLLQGIIMVGVIVG) traverse the membrane as a helical segment. Topologically, residues 304–313 (SKKTGINPDN) are extracellular. A helical transmembrane segment spans residues 314–334 (VATPIAASFGDLITLAILAWI). The Cytoplasmic portion of the chain corresponds to 335 to 347 (SQGLYSCLETYYY). The helical transmembrane segment at 348-368 (ISPLVCAFFLALTPIWIIIAA) threads the bilayer. Residues 369-376 (KHPATRTV) lie on the Extracellular side of the membrane. A helical membrane pass occupies residues 377–397 (LHSGWEPVITAMVISSIGGLI). The Cytoplasmic segment spans residues 398-406 (LDTTVSDPN). The chain crosses the membrane as a helical span at residues 407-427 (LVGIVVYTPVINGIGGNLVAI). The Extracellular segment spans residues 428-469 (QASRISTYLHLHSIPGELPEEPKGCSYPFRTFFGSGVNNKSA). The helical transmembrane segment at 470–490 (QVLLLFVIPGHLIFLYTIHLM) threads the bilayer. Over 491 to 498 (KSGHTSLT) the chain is Cytoplasmic. Residues 499–519 (VVFVVVYLFAAVLQVFTLLWI) traverse the membrane as a helical segment. The Extracellular portion of the chain corresponds to 520–543 (ADWMVHRFWRKGKDPDSFSIPYLT). A helical membrane pass occupies residues 544 to 564 (ALGDLLGTALLALSFHFLWLI). Over 565–573 (GDRDGDVGD) the chain is Cytoplasmic.

The protein belongs to the SLC41A transporter family.

The protein localises to the cell membrane. It catalyses the reaction Mg(2+)(in) = Mg(2+)(out). It carries out the reaction Mn(2+)(in) = Mn(2+)(out). The catalysed reaction is Co(2+)(in) = Co(2+)(out). The enzyme catalyses Ni(2+)(in) = Ni(2+)(out). It catalyses the reaction Fe(2+)(in) = Fe(2+)(out). Acts as a plasma-membrane magnesium transporter. Can also mediate the transport of other divalent metal cations in an order of Ba(2+) &gt; Ni(2+) &gt; Co(2+) &gt; Fe(2+) &gt; Mn(2+). This Mus musculus (Mouse) protein is Solute carrier family 41 member 2 (Slc41a2).